The sequence spans 606 residues: Flagellar WD repeat-containing protein Pf20 (606 aa).

The interval 229–250 (PLPGAERSLGGQSTAAAGGGAS) is disordered. 7 WD repeats span residues 324–354 (GHLL…KMWH), 366–396 (GHKD…KIWD), 408–438 (DHKQ…RLWD), 450–480 (GHVD…SVWD), 492–522 (GHQN…KLWD), 534–564 (TGKH…KAYS), and 576–606 (GHED…RLWS).

Inter-microtubule bridges in flagella.

It is found in the cell projection. Its subcellular location is the cilium. The protein localises to the flagellum. The polypeptide is Flagellar WD repeat-containing protein Pf20 (PF20) (Chlamydomonas reinhardtii (Chlamydomonas smithii)).